We begin with the raw amino-acid sequence, 723 residues long: Translation initiation factor IF-2 (723 aa).

The segment at Lys-112–Lys-138 is disordered. Residues Phe-114 to Lys-123 show a composition bias toward basic residues. The region spanning Glu-224–Lys-393 is the tr-type G domain. A G1 region spans residues Gly-233 to Thr-240. GTP is bound at residue Gly-233–Thr-240. Positions Gly-258–His-262 are G2. Residues Asp-279 to Gly-282 are G3. GTP is bound by residues Asp-279 to His-283 and Asn-333 to Asp-336. Positions Asn-333–Asp-336 are G4. Residues Ser-369–Leu-371 are G5.

This sequence belongs to the TRAFAC class translation factor GTPase superfamily. Classic translation factor GTPase family. IF-2 subfamily.

The protein resides in the cytoplasm. Functionally, one of the essential components for the initiation of protein synthesis. Protects formylmethionyl-tRNA from spontaneous hydrolysis and promotes its binding to the 30S ribosomal subunits. Also involved in the hydrolysis of GTP during the formation of the 70S ribosomal complex. The protein is Translation initiation factor IF-2 of Anoxybacillus flavithermus (strain DSM 21510 / WK1).